We begin with the raw amino-acid sequence, 133 residues long: Ribosome-binding factor A (133 aa).

Belongs to the RbfA family. As to quaternary structure, monomer. Binds 30S ribosomal subunits, but not 50S ribosomal subunits or 70S ribosomes.

Its subcellular location is the cytoplasm. Its function is as follows. One of several proteins that assist in the late maturation steps of the functional core of the 30S ribosomal subunit. Associates with free 30S ribosomal subunits (but not with 30S subunits that are part of 70S ribosomes or polysomes). Required for efficient processing of 16S rRNA. May interact with the 5'-terminal helix region of 16S rRNA. The sequence is that of Ribosome-binding factor A from Acinetobacter baylyi (strain ATCC 33305 / BD413 / ADP1).